Consider the following 164-residue polypeptide: UPF0303 protein RHECIAT_CH0003058 (164 aa).

It belongs to the UPF0303 family.

This is UPF0303 protein RHECIAT_CH0003058 from Rhizobium etli (strain CIAT 652).